A 469-amino-acid chain; its full sequence is Adenosylhomocysteinase (469 aa).

Threonine 63, aspartate 139, and glutamate 164 together coordinate substrate. 165-167 (TTT) provides a ligand contact to NAD(+). The substrate site is built by lysine 194 and aspartate 198. NAD(+) is bound by residues asparagine 199, 228 to 233 (GYGDVG), glutamate 251, asparagine 300, 321 to 323 (IGH), and asparagine 375.

It belongs to the adenosylhomocysteinase family. NAD(+) is required as a cofactor.

It is found in the cytoplasm. The catalysed reaction is S-adenosyl-L-homocysteine + H2O = L-homocysteine + adenosine. It functions in the pathway amino-acid biosynthesis; L-homocysteine biosynthesis; L-homocysteine from S-adenosyl-L-homocysteine: step 1/1. May play a key role in the regulation of the intracellular concentration of adenosylhomocysteine. The sequence is that of Adenosylhomocysteinase from Pseudomonas putida (strain GB-1).